The chain runs to 33 residues: Phosphoglycerate kinase (33 aa).

Lysine 13 serves as a coordination point for AMP. Position 13 (lysine 13) interacts with ATP.

This sequence belongs to the phosphoglycerate kinase family. Monomer. Requires Mg(2+) as cofactor.

It carries out the reaction (2R)-3-phosphoglycerate + ATP = (2R)-3-phospho-glyceroyl phosphate + ADP. This chain is Phosphoglycerate kinase, found in Pseudotsuga menziesii (Douglas-fir).